A 457-amino-acid polypeptide reads, in one-letter code: Paired box protein Pax-8 (457 aa).

A DNA-binding region (paired) is located at residues Gly-9–Lys-135. The tract at residues Gly-12–Thr-68 is PAI subdomain. The RED subdomain stretch occupies residues Lys-87 to Lys-135. Polar residues predominate over residues Leu-159 to Ile-182. Residues Leu-159–Leu-224 form a disordered region. Ser-304 bears the Phosphoserine mark.

In terms of assembly, interacts with WWTR1. In terms of tissue distribution, expressed in the developing excretory system and the thyroid gland.

The protein localises to the nucleus. Functionally, thought to encode a transcription factor. It may have a role in kidney cell differentiation. May play a regulatory role in mammalian development. This is Paired box protein Pax-8 (Pax8) from Mus musculus (Mouse).